A 196-amino-acid polypeptide reads, in one-letter code: Orotate phosphoribosyltransferase (196 aa).

A 5-phospho-alpha-D-ribose 1-diphosphate-binding site is contributed by 117–125; the sequence is EDIVTTGLS. Positions 121 and 149 each coordinate orotate.

Belongs to the purine/pyrimidine phosphoribosyltransferase family. PyrE subfamily. In terms of assembly, homodimer. Requires Mg(2+) as cofactor.

It catalyses the reaction orotidine 5'-phosphate + diphosphate = orotate + 5-phospho-alpha-D-ribose 1-diphosphate. It participates in pyrimidine metabolism; UMP biosynthesis via de novo pathway; UMP from orotate: step 1/2. In terms of biological role, catalyzes the transfer of a ribosyl phosphate group from 5-phosphoribose 1-diphosphate to orotate, leading to the formation of orotidine monophosphate (OMP). The protein is Orotate phosphoribosyltransferase of Methylobacterium sp. (strain 4-46).